The primary structure comprises 428 residues: tRNA(Ile2) 2-agmatinylcytidine synthetase TiaS (428 aa).

This sequence belongs to the TiaS family.

The protein localises to the cytoplasm. It catalyses the reaction cytidine(34) in tRNA(Ile2) + agmatine + ATP + H2O = 2-agmatinylcytidine(34) in tRNA(Ile2) + AMP + 2 phosphate + 2 H(+). ATP-dependent agmatine transferase that catalyzes the formation of 2-agmatinylcytidine (agm2C) at the wobble position (C34) of tRNA(Ile2), converting the codon specificity from AUG to AUA. This chain is tRNA(Ile2) 2-agmatinylcytidine synthetase TiaS, found in Methanosarcina mazei (strain ATCC BAA-159 / DSM 3647 / Goe1 / Go1 / JCM 11833 / OCM 88) (Methanosarcina frisia).